Reading from the N-terminus, the 129-residue chain is MAKEPQRVRRRERKNIVSGVAHVNASFNNTMITITDAQGNTISWSSAGAMGFKGSRKSTPYAAQVAAEDAGRKAAEHGMRTLEVEVSGPGSGRESALRALQAAGFTVTSIRDVTSIPHNGCRPRKRRRV.

This sequence belongs to the universal ribosomal protein uS11 family. As to quaternary structure, part of the 30S ribosomal subunit. Interacts with proteins S7 and S18. Binds to IF-3.

In terms of biological role, located on the platform of the 30S subunit, it bridges several disparate RNA helices of the 16S rRNA. Forms part of the Shine-Dalgarno cleft in the 70S ribosome. The polypeptide is Small ribosomal subunit protein uS11 (Methylobacterium radiotolerans (strain ATCC 27329 / DSM 1819 / JCM 2831 / NBRC 15690 / NCIMB 10815 / 0-1)).